The chain runs to 236 residues: Protein INCA1 (236 aa).

Ser-23 bears the Phosphoserine mark. The interval 75-99 is interaction with CCNA1 and CCNA1/CDK2 complex; essential for CDK2 inhibitory activity; sequence GLYPPEQLPPPEMLWRRKKRRPCLE. The short motif at 90–95 is the Nuclear localization signal element; sequence RRKKRR. The residue at position 182 (Thr-182) is a Phosphothreonine. A phosphoserine mark is found at Ser-191 and Ser-194.

Belongs to the INCA family. As to quaternary structure, interacts with CCNA1. Interacts with CCNA2, CCNB1 and CCNE1. Found in a complex with CCNA1 and CDK2. Interacts with ZNF16; the interaction inhibits INCA1 activity and induces the cell cycle process. Interacts with SPACA9. Interacts with the CCNA1/CDK2 complex. Interacts with ING5, DAZAP2, RNF26, USP15, SPOUT1, DPH7, TRIM26 and RAB5C. Post-translationally, phosphorylated when part of a complex with CCNA1 and CDK2. Strongly phosphorylated by CDK2 on its C-terminal region spanning amino acid 149-221. Less intensively phosphorylated by CDK2 on its first 75 amino acid residues. In terms of tissue distribution, detected in testis, and at lower levels in ovary. Detected at very low levels in testis tumors. Down-regulated in bone marrow cells in acute myeloid and lymphoid leukemia patients as compared with normal bone marrow cells.

Its subcellular location is the nucleus. The protein localises to the cytoplasm. Functionally, binds to CDK2-bound cyclins and inhibits the kinase activity of CDK2; binding to cyclins is critical for its function as CDK inhibitor. Inhibits cell growth and cell proliferation and may play a role in cell cycle control. Required for ING5-mediated regulation of S-phase progression, enhancement of Fas-induced apoptosis and inhibition of cell growth. The protein is Protein INCA1 (INCA1) of Homo sapiens (Human).